The following is a 471-amino-acid chain: Putative multidrug resistance protein MdtD (471 aa).

The Periplasmic portion of the chain corresponds to 1–11 (MTELPDSTRWQ). The helical transmembrane segment at 12-32 (LWIVAFGFFMQSLDTTIVNTA) threads the bilayer. The Cytoplasmic segment spans residues 33–48 (LPSMAQSLGESPLHMH). A helical transmembrane segment spans residues 49 to 69 (MVIVSYVLTVAVMLPASGWLA). The Periplasmic portion of the chain corresponds to 70-76 (DKVGVRN). A helical transmembrane segment spans residues 77-97 (IFFTAIVLFTLGSLFCALSGT). The Cytoplasmic segment spans residues 98-101 (LNEL). The chain crosses the membrane as a helical span at residues 102–124 (LLARALQGVGGAMMVPVGRLTVM). Residues 125 to 137 (KIVPREQYMAAMT) are Periplasmic-facing. The chain crosses the membrane as a helical span at residues 138–158 (FVTLPGQVGPLLGPALGGLLV). The Cytoplasmic portion of the chain corresponds to 159–164 (EYASWH). The helical transmembrane segment at 165-185 (WIFLINIPVGIIGAIATLLLM) threads the bilayer. Residues 186-196 (PNYTMQTRRFD) lie on the Periplasmic side of the membrane. A helical transmembrane segment spans residues 197 to 217 (LSGFLLLAVGMAVLTLALDGS). At 218 to 224 (KGTGLSP) the chain is on the cytoplasmic side. A helical transmembrane segment spans residues 225–245 (LAIAGLVAVGVVALVLYLLHA). The Periplasmic segment spans residues 246–262 (RNNNRALFSLKLFRTRT). Residues 263–283 (FSLGLAGSFAGRIGSGMLPFM) traverse the membrane as a helical segment. The Cytoplasmic segment spans residues 284 to 285 (TP). A helical transmembrane segment spans residues 286 to 306 (VFLQIGLGFSPFHAGLMMIPM). Residues 307-341 (VLGSMGMKRIVVQVVNRFGYRRVLVATTLGLSLIT) lie on the Periplasmic side of the membrane. The helical transmembrane segment at 342 to 362 (LLFMTTALLGWYYVLPFVLFL) threads the bilayer. Residues 363–395 (QGMVNSTRFSSMNTLTLKDLPDNLASSGNSLLS) are Cytoplasmic-facing. A helical membrane pass occupies residues 396-416 (MIMQLSMSIGVTIAGLLLGLF). Residues 417 to 430 (GSQHVSVDSGTTQT) are Periplasmic-facing. The helical transmembrane segment at 431–451 (VFMYTWLSMAFIIALPAFIFA) threads the bilayer. Over 452–471 (RVPNDTHQNVAISRRKRSAQ) the chain is Cytoplasmic.

Belongs to the major facilitator superfamily. TCR/Tet family.

The protein resides in the cell inner membrane. The polypeptide is Putative multidrug resistance protein MdtD (Shigella sonnei (strain Ss046)).